Consider the following 111-residue polypeptide: Cytochrome c6 (111 aa).

The signal sequence occupies residues 1–25 (MKRLLSLIFLVFVFFAVMLTPPALA). Residues C39, C42, H43, and M83 each contribute to the heme c site.

The protein belongs to the cytochrome c family. PetJ subfamily. Monomer. In terms of processing, binds 1 heme c group covalently per subunit.

The protein resides in the cellular thylakoid lumen. Its function is as follows. Functions as an electron carrier between membrane-bound cytochrome b6-f and photosystem I in oxygenic photosynthesis. This Rippkaea orientalis (strain PCC 8801 / RF-1) (Cyanothece sp. (strain PCC 8801)) protein is Cytochrome c6.